The following is a 339-amino-acid chain: Nitrilase 2 (339 aa).

At Ser-2 the chain carries N-acetylserine. Positions 18-290 constitute a CN hydrolase domain; the sequence is VRATIVQAST…EGLITADLDL (273 aa). Glu-58 acts as the Proton acceptor in catalysis. Lys-145 (proton donor) is an active-site residue. The active-site Nucleophile is Cys-179.

It belongs to the carbon-nitrogen hydrolase superfamily. Nitrilase family.

It is found in the cell membrane. It catalyses the reaction a nitrile + 2 H2O = a carboxylate + NH4(+). In terms of biological role, can convert indole-3-acetonitrile to the plant hormone indole-3-acetic acid. This is Nitrilase 2 (NIT2) from Arabidopsis thaliana (Mouse-ear cress).